The primary structure comprises 210 residues: Outer-membrane lipoprotein carrier protein (210 aa).

Residues 1–26 form the signal peptide; the sequence is MHMIRRAAGALAVFAVAALAAAPAWA.

It belongs to the LolA family. In terms of assembly, monomer.

Its subcellular location is the periplasm. Its function is as follows. Participates in the translocation of lipoproteins from the inner membrane to the outer membrane. Only forms a complex with a lipoprotein if the residue after the N-terminal Cys is not an aspartate (The Asp acts as a targeting signal to indicate that the lipoprotein should stay in the inner membrane). The polypeptide is Outer-membrane lipoprotein carrier protein (Bordetella pertussis (strain Tohama I / ATCC BAA-589 / NCTC 13251)).